Consider the following 238-residue polypeptide: Fatty acid metabolism regulator protein (238 aa).

Residues Q6 to F74 form the HTH gntR-type domain. The H-T-H motif DNA-binding region spans E34–Q53.

As to quaternary structure, homodimer.

It is found in the cytoplasm. Functionally, multifunctional regulator of fatty acid metabolism. The sequence is that of Fatty acid metabolism regulator protein from Erwinia tasmaniensis (strain DSM 17950 / CFBP 7177 / CIP 109463 / NCPPB 4357 / Et1/99).